Here is a 1267-residue protein sequence, read N- to C-terminus: DNA-directed RNA polymerase subunit beta (1267 aa).

It belongs to the RNA polymerase beta chain family. As to quaternary structure, the RNAP catalytic core consists of 2 alpha, 1 beta, 1 beta' and 1 omega subunit. When a sigma factor is associated with the core the holoenzyme is formed, which can initiate transcription.

It catalyses the reaction RNA(n) + a ribonucleoside 5'-triphosphate = RNA(n+1) + diphosphate. Its function is as follows. DNA-dependent RNA polymerase catalyzes the transcription of DNA into RNA using the four ribonucleoside triphosphates as substrates. The polypeptide is DNA-directed RNA polymerase subunit beta (rpoB) (Carsonella ruddii (strain PV)).